A 443-amino-acid chain; its full sequence is Protein UIP5 (443 aa).

Residues 1 to 27 (MSRDVRAEKLAISLLILSLFLIFQLVA) form the signal peptide. Over 28–398 (EIYLNNGDQY…LFKVVLTIWH (371 aa)) the chain is Perinuclear space. Residues 399–420 (YSEILLLIMGIYLFSACIRVFQ) form a helical membrane-spanning segment. The Cytoplasmic portion of the chain corresponds to 421-443 (RRFKKIRSRRKRAGSHSVGLLPM).

It is found in the nucleus membrane. The sequence is that of Protein UIP5 (UIP5) from Saccharomyces cerevisiae (strain ATCC 204508 / S288c) (Baker's yeast).